Here is a 705-residue protein sequence, read N- to C-terminus: Calpain-1 catalytic subunit (705 aa).

In terms of domain architecture, Calpain catalytic spans 48-347; sequence LFRDPQFPAG…FSRLEICNLT (300 aa). Active-site residues include C108, H265, and N289. The interval 348–517 is domain III; the sequence is PDALTKDELS…KQSDTAELDE (170 aa). Residues 518-533 form a linker region; that stretch reads EISADLADEEEITEDD. Residues 530–565 enclose the EF-hand 1 domain; that stretch reads TEDDIEDGFKNMFQQLAGEDMEISVFELKTILNRVI. The tract at residues 534–704 is domain IV; the sequence is IEDGFKNMFQ…LAEWLLLTMC (171 aa). Ca(2+) contacts are provided by D549, E551, E556, D589, D591, S593, R595, E600, D619, D621, S623, T625, and E630. 2 consecutive EF-hand domains span residues 606-641 and 671-705; these read NKIR…AGFK and VKLE…TMCG.

This sequence belongs to the peptidase C2 family. As to quaternary structure, heterodimer of large (catalytic) and a small (regulatory) subunit. Ca(2+) serves as cofactor. The N-terminus is blocked. As to expression, ubiquitously expressed.

It is found in the cytoplasm. It localises to the cell membrane. It catalyses the reaction Broad endopeptidase specificity.. With respect to regulation, activated by micromolar concentrations of calcium and inhibited by calpastatin. In terms of biological role, calcium-regulated non-lysosomal thiol-protease which catalyze limited proteolysis of substrates involved in cytoskeletal remodeling and signal transduction. In Gallus gallus (Chicken), this protein is Calpain-1 catalytic subunit.